A 344-amino-acid polypeptide reads, in one-letter code: Putative glycosyltransferase EpsH (344 aa).

It belongs to the glycosyltransferase 2 family.

Functionally, may be involved in the production of the exopolysaccharide (EPS) component of the extracellular matrix during biofilm formation. EPS is responsible for the adhesion of chains of cells into bundles. Required for biofilm maintenance. The protein is Putative glycosyltransferase EpsH (epsH) of Bacillus subtilis (strain 168).